We begin with the raw amino-acid sequence, 621 residues long: DnaJ homolog subfamily C member 2 (621 aa).

An N-acetylmethionine modification is found at Met1. The epitope (recognized by CD8(+) cytotoxic T-lymphocytes) stretch occupies residues 23-31 (STLCQVEPV). Phosphoserine occurs at positions 47, 49, 60, and 63. A J domain is found at 88 to 161 (DHYAVLGLGH…VKRRAFNSVD (74 aa)). The interval 160-250 (VDPTFDNSVP…RDERRWIEKQ (91 aa)) is ZRF1-UBD. Disordered stretches follow at residues 294-315 (EKKAKAEAKRKEQEAKEKQRQA) and 426-453 (KEEAEARMRQASKNTEKSTGGGGNGSKN). SANT domains are found at residues 449-511 (NGSK…KLDP) and 549-604 (TDFT…EMVK).

As to quaternary structure, component of ribosome-associated complex (RAC), a heterodimer composed of Hsp70/DnaK-type chaperone HSPA14 and Hsp40/DnaJ-type chaperone DNAJC2. Interacts (via ZRF1-UBD region) with ID1. Post-translationally, phosphorylated in M (mitotic) phase. As to expression, widely expressed.

Its subcellular location is the nucleus. It is found in the cytoplasm. The protein localises to the cytosol. Functionally, acts both as a chaperone in the cytosol and as a chromatin regulator in the nucleus. When cytosolic, acts as a molecular chaperone: component of the ribosome-associated complex (RAC), a complex involved in folding or maintaining nascent polypeptides in a folding-competent state. In the RAC complex, stimulates the ATPase activity of the ribosome-associated pool of Hsp70-type chaperones HSPA14 that bind to the nascent polypeptide chain. When nuclear, mediates the switching from polycomb-repressed genes to an active state: specifically recruited at histone H2A ubiquitinated at 'Lys-119' (H2AK119ub), and promotes the displacement of the polycomb PRC1 complex from chromatin, thereby facilitating transcription activation. In Homo sapiens (Human), this protein is DnaJ homolog subfamily C member 2 (DNAJC2).